The following is a 445-amino-acid chain: 6-phosphogluconate dehydrogenase, decarboxylating (445 aa).

Residues 1-4 (AVMG), 22-24 (NRS), 63-65 (VKA), and asparagine 91 contribute to the NADP(+) site. Substrate-binding positions include asparagine 91 and 117-119 (SGG). The Proton acceptor role is filled by lysine 172. Residue 175–176 (HN) participates in substrate binding. The active-site Proton donor is glutamate 179. Positions 180, 249, 276, 434, and 440 each coordinate substrate.

Belongs to the 6-phosphogluconate dehydrogenase family. As to quaternary structure, homodimer.

The catalysed reaction is 6-phospho-D-gluconate + NADP(+) = D-ribulose 5-phosphate + CO2 + NADPH. It participates in carbohydrate degradation; pentose phosphate pathway; D-ribulose 5-phosphate from D-glucose 6-phosphate (oxidative stage): step 3/3. Its function is as follows. Catalyzes the oxidative decarboxylation of 6-phosphogluconate to ribulose 5-phosphate and CO(2), with concomitant reduction of NADP to NADPH. The protein is 6-phosphogluconate dehydrogenase, decarboxylating (gnd) of Raoultella terrigena (Klebsiella terrigena).